The primary structure comprises 238 residues: MSEQDFREIARNGLWRNNPGLVQLLGLCPLLGTSNSTVNALGLGLATMLVLACSNAAVSLVRGAVSEAIRLPAFVMIIAVLTTCIELLMQAWTYELYQVLGIFIPLITTNCVILGRAEAFAAKNGVLRASFDGLLMGLGFALVLLVLGGLRELLGQGTLLADMHLLFGPAAADWKIQPFPQYQGFLLAILPPGAFIMLGLLIALKNRIDESLAERAKVQAGDVPATQRQRVRVTGVIE.

A run of 5 helical transmembrane segments spans residues 41 to 61 (LGLG…VSLV), 71 to 91 (LPAF…LMQA), 95 to 115 (ELYQ…VILG), 130 to 150 (SFDG…LGGL), and 184 to 204 (GFLL…LIAL).

The protein belongs to the NqrDE/RnfAE family. As to quaternary structure, the complex is composed of six subunits: RnfA, RnfB, RnfC, RnfD, RnfE and RnfG.

Its subcellular location is the cell inner membrane. Part of a membrane-bound complex that couples electron transfer with translocation of ions across the membrane. This chain is Ion-translocating oxidoreductase complex subunit E, found in Pseudomonas aeruginosa (strain LESB58).